Here is a 39-residue protein sequence, read N- to C-terminus: Metallocarboxypeptidase inhibitor (39 aa).

Q1 is subject to Pyrrolidone carboxylic acid. 3 cysteine pairs are disulfide-bonded: C8–C24, C12–C27, and C18–C34.

As to expression, highly concentrated in tubers. Closely related but distinct forms of MCPI are present in leaves, stems and buds.

Its function is as follows. May play a defensive role against insect attacks. Inhibits A.aegypti carboxypeptidase CPB1. The polypeptide is Metallocarboxypeptidase inhibitor (Solanum tuberosum (Potato)).